A 609-amino-acid chain; its full sequence is Interleukin-1 receptor-associated kinase 3 (609 aa).

The region spanning 41–106 is the Death domain; that stretch reads WRGLAERLSN…RAIHLIINYG (66 aa). A Phosphothreonine modification is found at Thr-110. The Protein kinase domain maps to 178–463; that stretch reads FHKDFLIGEG…SSLESTQPSL (286 aa). ATP contacts are provided by residues 184-192, Lys-205, 308-311, and Asp-324; these read IGEGEIFEV and SSAN. Ser-480 carries the phosphoserine modification.

This sequence belongs to the protein kinase superfamily. TKL Ser/Thr protein kinase family. Pelle subfamily. As to quaternary structure, monomer. Homodimer. May interact with IRAK4 (when phosphorylated). Interacts (when phosphorylated at Thr-110) with PIN1 (via WW domain) in response to IL33-mediated (but not TLR4 ligand LPS) dendritic cell stimulation. As to expression, expressed in inflamed lung macrophages (at protein level). Expressed in dendritic cells (at protein level). Highly expressed in liver and thymus and at lower levels in heart, brain, spleen and kidney.

Its subcellular location is the cytoplasm. It is found in the nucleus. Putative inactive protein kinase which regulates signaling downstream of immune receptors including IL1R and Toll-like receptors. Inhibits dissociation of IRAK1 and IRAK4 from the Toll-like receptor signaling complex by either inhibiting the phosphorylation of IRAK1 and IRAK4 or stabilizing the receptor complex. Upon IL33-induced lung inflammation, positively regulates expression of IL6, CSF3, CXCL2 and CCL5 mRNAs in dendritic cells. The chain is Interleukin-1 receptor-associated kinase 3 from Mus musculus (Mouse).